A 621-amino-acid chain; its full sequence is Phosphoenolpyruvate carboxykinase [GTP] (621 aa).

Substrate-binding positions include Arg-82 and 220 to 222; that span reads YGG. Mn(2+) is bound by residues Lys-229 and His-249. Ser-271 is a binding site for substrate. 272-277 lines the GTP pocket; sequence QCGKTN. Cys-273 is an active-site residue. Asp-296 serves as a coordination point for Mn(2+). 386–388 contributes to the substrate binding site; that stretch reads NSR. Residues Arg-388, Arg-419, and 514–517 each bind GTP; that span reads FGEN.

It belongs to the phosphoenolpyruvate carboxykinase [GTP] family. As to quaternary structure, monomer. It depends on Mn(2+) as a cofactor.

The protein localises to the cytoplasm. It catalyses the reaction oxaloacetate + GTP = phosphoenolpyruvate + GDP + CO2. It functions in the pathway carbohydrate biosynthesis; gluconeogenesis. Its function is as follows. Catalyzes the conversion of oxaloacetate (OAA) to phosphoenolpyruvate (PEP), the rate-limiting step in the metabolic pathway that produces glucose from lactate and other precursors derived from the citric acid cycle. This Corynebacterium kroppenstedtii (strain DSM 44385 / JCM 11950 / CIP 105744 / CCUG 35717) protein is Phosphoenolpyruvate carboxykinase [GTP].